The chain runs to 309 residues: Olfactory receptor 8A1 (309 aa).

At 1-28 (MTAENQSTVTEFILGGLTNRPELQLPLF) the chain is on the extracellular side. The chain crosses the membrane as a helical span at residues 29-49 (LLFLGIYVVTMVGNLGMITLI). Topologically, residues 50–56 (GLNSQLH) are cytoplasmic. Residues 57 to 77 (TPMYFFLSNLSLVDLCYSSVI) form a helical membrane-spanning segment. At 78–90 (TPKMLINFVSQRN) the chain is on the extracellular side. A helical membrane pass occupies residues 91–111 (LISYVGCMSQLYFFLVFVIAE). A disulfide bridge connects residues C97 and C188. The Cytoplasmic portion of the chain corresponds to 112–133 (CYMLTVMAYDRYVAICQPLLYN). Residues 134-154 (IIMSPALCSLLVAFVYAVGLI) traverse the membrane as a helical segment. At 155–195 (GSAIETGLMLKLNYCEDLISHYFCDILPLMKLSCSSTYDVE) the chain is on the extracellular side. A helical transmembrane segment spans residues 196 to 216 (MAVFFLAGFDIIVTSLTVLIS). Topologically, residues 217 to 238 (YAFILSSILRISSNEGRSKAFS) are cytoplasmic. The chain crosses the membrane as a helical span at residues 239–259 (TCSSHFAAVGLFYGSTAFMYL). Residues 260–270 (KPSTASSLAQE) are Extracellular-facing. Residues 271–291 (NVASVFYTTVIPMFNPLIYSL) traverse the membrane as a helical segment. Residues 292–309 (RNKEVKTALDKTLRRKVF) are Cytoplasmic-facing.

The protein belongs to the G-protein coupled receptor 1 family.

It localises to the cell membrane. Its function is as follows. Odorant receptor. The protein is Olfactory receptor 8A1 of Mus musculus (Mouse).